A 955-amino-acid chain; its full sequence is 2-oxoglutarate dehydrogenase E1 component (955 aa).

It belongs to the alpha-ketoglutarate dehydrogenase family. As to quaternary structure, homodimer. Part of the 2-oxoglutarate dehydrogenase (OGDH) complex composed of E1 (2-oxoglutarate dehydrogenase), E2 (dihydrolipoamide succinyltransferase) and E3 (dihydrolipoamide dehydrogenase); the complex contains multiple copies of the three enzymatic components (E1, E2 and E3). Thiamine diphosphate is required as a cofactor.

The catalysed reaction is N(6)-[(R)-lipoyl]-L-lysyl-[protein] + 2-oxoglutarate + H(+) = N(6)-[(R)-S(8)-succinyldihydrolipoyl]-L-lysyl-[protein] + CO2. Its function is as follows. E1 component of the 2-oxoglutarate dehydrogenase (OGDH) complex which catalyzes the decarboxylation of 2-oxoglutarate, the first step in the conversion of 2-oxoglutarate to succinyl-CoA and CO(2). The protein is 2-oxoglutarate dehydrogenase E1 component of Bacillus cereus (strain G9842).